Consider the following 205-residue polypeptide: CASP-like protein 0U1 (205 aa).

Over 1–66 the chain is Cytoplasmic; that stretch reads MSGGDIDPTA…GYHKFAVFQF (66 aa). In terms of domain architecture, MARVEL spans 10 to 162; the sequence is AINSPKFRLI…SMMFTWKEWR (153 aa). A helical transmembrane segment spans residues 67 to 87; it reads LVVICVTYWLFTMLWMGMYLI. Over 88-90 the chain is Extracellular; it reads QKV. A helical membrane pass occupies residues 91 to 111; that stretch reads PPAGTEFMIYAVFNVLILIAF. Over 112-137 the chain is Cytoplasmic; sequence STSWTECNETIVDPTYPVCKRATGAK. Residues 138 to 158 form a helical membrane-spanning segment; the sequence is ASIAFAMFTWLALCVSMMFTW. The Extracellular portion of the chain corresponds to 159–167; it reads KEWRDQNYE. The helical transmembrane segment at 168-188 threads the bilayer; that stretch reads GLPIFGDFSSFMPGGGGGGMG. Residues 189 to 205 are Cytoplasmic-facing; it reads GGGGYERPSDVNTQTYA.

This sequence belongs to the Casparian strip membrane proteins (CASP) family. As to quaternary structure, homodimer and heterodimers.

The protein localises to the cell membrane. The sequence is that of CASP-like protein 0U1 from Micromonas pusilla (strain CCMP1545) (Picoplanktonic green alga).